An 825-amino-acid chain; its full sequence is AP-3 complex subunit delta (825 aa).

HEAT repeat units follow at residues 131-168 (GLAR…QYPE), 169-205 (AISA…RAPK), 207-243 (YLEF…YEPR), 244-281 (LVKK…LVGH), 285-323 (DKLA…THPS), 324-360 (LVSA…KENI), 363-400 (IVKT…KSTY), 469-513 (EKRT…LAHR), 515-547 (LLQA…LWVE), and 548-584 (KIVS…IVNT). Positions 787–825 (STNQGSMGDIVLETKSPIRVEKKKSKKKKKKKEKTSGKE) are disordered. The segment covering 807-819 (EKKKSKKKKKKKE) has biased composition (basic residues).

The protein belongs to the adaptor complexes large subunit family. In terms of assembly, adaptor protein complex 3 (AP-3) is a heterotetramer composed of 2 large adaptins (apl5 and apl6), a medium adaptin (apm3) and a small adaptin (aps3).

The protein localises to the golgi apparatus. The protein resides in the cytoplasmic vesicle. It is found in the clathrin-coated vesicle membrane. Its function is as follows. Part of the AP-3 complex, an adaptor-related complex which is not clathrin-associated. The complex is associated with the Golgi region as well as more peripheral structures. It facilitates the budding of vesicles from the Golgi membrane and may be directly involved in trafficking to the vacuole. In Schizosaccharomyces pombe (strain 972 / ATCC 24843) (Fission yeast), this protein is AP-3 complex subunit delta (apl5).